Consider the following 121-residue polypeptide: ATP synthase epsilon chain (121 aa).

This sequence belongs to the ATPase epsilon chain family. In terms of assembly, F-type ATPases have 2 components, CF(1) - the catalytic core - and CF(0) - the membrane proton channel. CF(1) has five subunits: alpha(3), beta(3), gamma(1), delta(1), epsilon(1). CF(0) has three main subunits: a, b and c.

It is found in the cell membrane. In terms of biological role, produces ATP from ADP in the presence of a proton gradient across the membrane. In Mycobacterium bovis (strain ATCC BAA-935 / AF2122/97), this protein is ATP synthase epsilon chain (atpC).